The primary structure comprises 416 residues: MSISLSSLILLPIWINMAQIQQGGPDEKEKTTALKDLLSRIDLDELMKKDEPPLDFPDTLEGFEYAFNEKGQLRHIKTGEPFVFNYREDLHRWNQKRYEALGEIITKYVYELLEKDCNLKKVSIPVDATESEPKSFIFMSEDALTNPQKLMVLIHGSGVVRAGQWARRLIINEDLDSGTQIPFIKRAVAEGYGVIVLNPNENYIEVEKPKIHVQSSSDSSDEPAEKRERKDKVSKETKKRRDFYEKYRNPQREKEMMQLYIRENGSPEEHAIYVWDHFIAQAAAENVFFVAHSYGGLAFVELMIQREADVKNKVTAVALTDSVHNVWHQEAGKTIREWMRENCCNWVSSSEPLDTSVESMLPDCPRVSAGTDRHELTSWKSFPSIFKFFTEASEAKTSSLKPAVTRRSHRIKHEEL.

Residues 1–18 (MSISLSSLILLPIWINMA) form the signal peptide. Residues 208–247 (KPKIHVQSSSDSSDEPAEKRERKDKVSKETKKRRDFYEKY) form a disordered region. A compositionally biased stretch (basic and acidic residues) spans 223–236 (PAEKRERKDKVSKE). The active-site Nucleophile is serine 293. The Prevents secretion from ER signature appears at 413–416 (HEEL).

It belongs to the ARB2A family. In terms of assembly, interacts with AGO2. Found in a complex, composed of AGO2, CHD7 and ARB2A.

It localises to the nucleus. Its subcellular location is the cytoplasm. It is found in the endoplasmic reticulum. Functionally, plays a role in the regulation of alternative splicing, by interacting with AGO2 and CHD7. Seems to be required for stabilizing protein-protein interactions at the chromatin-spliceosome interface. May have hydrolase activity. The chain is Cotranscriptional regulator ARB2A from Homo sapiens (Human).